We begin with the raw amino-acid sequence, 316 residues long: Nucleotide-binding protein Sala_2050 (316 aa).

18–25 (GLSGAGKS) lines the ATP pocket. Residue 69–72 (DSRS) coordinates GTP. Positions 283-316 (GYEPTLTHRNLDSAPQDGLEGKPPSAARASGGAR) are disordered.

Belongs to the RapZ-like family.

Its function is as follows. Displays ATPase and GTPase activities. The chain is Nucleotide-binding protein Sala_2050 from Sphingopyxis alaskensis (strain DSM 13593 / LMG 18877 / RB2256) (Sphingomonas alaskensis).